A 226-amino-acid chain; its full sequence is Histidine biosynthesis bifunctional protein HisIE (226 aa).

The interval 1–131 is phosphoribosyl-AMP cyclohydrolase; that stretch reads MMPMNQEFIQ…STFNRPLSNT (131 aa). The tract at residues 132 to 226 is phosphoribosyl-ATP pyrophosphohydrolase; sequence CSELFEVIKD…KRRQSKSNPK (95 aa).

In the N-terminal section; belongs to the PRA-CH family. This sequence in the C-terminal section; belongs to the PRA-PH family.

Its subcellular location is the cytoplasm. The enzyme catalyses 1-(5-phospho-beta-D-ribosyl)-ATP + H2O = 1-(5-phospho-beta-D-ribosyl)-5'-AMP + diphosphate + H(+). The catalysed reaction is 1-(5-phospho-beta-D-ribosyl)-5'-AMP + H2O = 1-(5-phospho-beta-D-ribosyl)-5-[(5-phospho-beta-D-ribosylamino)methylideneamino]imidazole-4-carboxamide. It participates in amino-acid biosynthesis; L-histidine biosynthesis; L-histidine from 5-phospho-alpha-D-ribose 1-diphosphate: step 2/9. Its pathway is amino-acid biosynthesis; L-histidine biosynthesis; L-histidine from 5-phospho-alpha-D-ribose 1-diphosphate: step 3/9. This is Histidine biosynthesis bifunctional protein HisIE from Prochlorococcus marinus (strain SARG / CCMP1375 / SS120).